A 301-amino-acid polypeptide reads, in one-letter code: Probable 2-(5''-triphosphoribosyl)-3'-dephosphocoenzyme-A synthase (301 aa).

This sequence belongs to the CitG/MdcB family.

The enzyme catalyses 3'-dephospho-CoA + ATP = 2'-(5''-triphospho-alpha-D-ribosyl)-3'-dephospho-CoA + adenine. The sequence is that of Probable 2-(5''-triphosphoribosyl)-3'-dephosphocoenzyme-A synthase from Pectobacterium carotovorum subsp. carotovorum (strain PC1).